Reading from the N-terminus, the 123-residue chain is UPF0295 protein Bcer98_0460 (123 aa).

A run of 2 helical transmembrane segments spans residues 12-32 (IRTFALSLVFIGLLIAYLGVF) and 43-63 (FMMLGFLAVLASTFVYFWIGM).

Belongs to the UPF0295 family.

It is found in the cell membrane. This chain is UPF0295 protein Bcer98_0460, found in Bacillus cytotoxicus (strain DSM 22905 / CIP 110041 / 391-98 / NVH 391-98).